Reading from the N-terminus, the 531-residue chain is Apolipoprotein N-acyltransferase (531 aa).

Helical transmembrane passes span 8–28, 34–54, 69–89, 105–125, 136–156, 178–198, and 207–227; these read IILL…LLAV, FGIF…IDGV, PAAI…WWLG, LAVV…VVIA, IAAL…VFTG, VVNL…PALI, and GLAI…YRLA. A CN hydrolase domain is found at 243–493; that stretch reads VQPVIDQAKK…RGVLDTILPG (251 aa). Residue glutamate 287 is the Proton acceptor of the active site. The active site involves lysine 351. Cysteine 405 acts as the Nucleophile in catalysis. Residues 507 to 527 form a helical membrane-spanning segment; the sequence is IFWLSMAILSIVASFSRFGFN.

This sequence belongs to the CN hydrolase family. Apolipoprotein N-acyltransferase subfamily.

It is found in the cell inner membrane. It catalyses the reaction N-terminal S-1,2-diacyl-sn-glyceryl-L-cysteinyl-[lipoprotein] + a glycerophospholipid = N-acyl-S-1,2-diacyl-sn-glyceryl-L-cysteinyl-[lipoprotein] + a 2-acyl-sn-glycero-3-phospholipid + H(+). Its pathway is protein modification; lipoprotein biosynthesis (N-acyl transfer). In terms of biological role, catalyzes the phospholipid dependent N-acylation of the N-terminal cysteine of apolipoprotein, the last step in lipoprotein maturation. The polypeptide is Apolipoprotein N-acyltransferase (Sinorhizobium medicae (strain WSM419) (Ensifer medicae)).